Here is a 203-residue protein sequence, read N- to C-terminus: A-type ATP synthase subunit E (203 aa).

This sequence belongs to the V-ATPase E subunit family. In terms of assembly, has multiple subunits with at least A(3), B(3), C, D, E, F, H, I and proteolipid K(x).

The protein localises to the cell membrane. Functionally, component of the A-type ATP synthase that produces ATP from ADP in the presence of a proton gradient across the membrane. The protein is A-type ATP synthase subunit E of Desulfurococcus sp. (strain SY).